A 492-amino-acid chain; its full sequence is Solute carrier family 2, facilitated glucose transporter member 1 (492 aa).

Met-1 carries the post-translational modification N-acetylmethionine. Residues 1–11 are Cytoplasmic-facing; that stretch reads MEPSSKKLTGR. A helical transmembrane segment spans residues 12–33; the sequence is LMLAVGGAVLGSLQFGYNTGVI. Residues 34 to 66 are Extracellular-facing; the sequence is NAPQKVIEEFYNQTWLHRYGESISPATLTTLWS. The N-linked (GlcNAc...) asparagine glycan is linked to Asn-45. The helical transmembrane segment at 67–87 threads the bilayer; the sequence is LSVAIFSVGGMIGSFSVGLFV. Topologically, residues 88–90 are cytoplasmic; it reads NRF. The chain crosses the membrane as a helical span at residues 91 to 112; it reads GRRNSMLMMNLLAFISAVLMGF. Residues 113-120 are Extracellular-facing; it reads SKLGKSFE. The helical transmembrane segment at 121–144 threads the bilayer; the sequence is MLILGRFIIGVYCGLTTGFVPMYV. Residues 145 to 155 are Cytoplasmic-facing; that stretch reads GEVSPTALRGA. A helical transmembrane segment spans residues 156 to 176; the sequence is LGTLHQLGIVVGILIAQVFGL. Gln-161 is a binding site for D-glucose. The Extracellular segment spans residues 177–185; sequence DSIMGNEEL. The chain crosses the membrane as a helical span at residues 186 to 206; sequence WPLLLSVIFIPALLQCVLLPF. Residues 207–271 lie on the Cytoplasmic side of the membrane; it reads CPESPRFLLI…LFRSAAYRQP (65 aa). Ser-226 carries the post-translational modification Phosphoserine. A helical transmembrane segment spans residues 272–293; sequence ILIAVVLQLSQQLSGINAVFYY. D-glucose is bound by residues 282–283 and Asn-288; that span reads QQ. Topologically, residues 294–306 are extracellular; it reads STSIFEKAGVQQP. A helical transmembrane segment spans residues 307–328; that stretch reads VYATIGSGIVNTAFTVVSLFVV. Asn-317 serves as a coordination point for D-glucose. The Cytoplasmic portion of the chain corresponds to 329–334; sequence ERAGRR. A helical membrane pass occupies residues 335 to 355; that stretch reads TLHLIGLAGMAGCAVLMTIAL. The Extracellular segment spans residues 356 to 365; the sequence is ALLEQLPWMS. The chain crosses the membrane as a helical span at residues 366–388; it reads YLSIVAIFGFVAFFEVGPGPIPW. D-glucose contacts are provided by Glu-380 and Trp-388. Residues 389-401 are Cytoplasmic-facing; the sequence is FIVAELFSQGPRP. A helical transmembrane segment spans residues 402–422; it reads AAIAVAGFSNWTSNFIVGMCF. Residues 423–429 lie on the Extracellular side of the membrane; the sequence is QYVEQLC. The chain crosses the membrane as a helical span at residues 430–450; sequence GPYVFIIFTVLLVLFFIFTYF. The residue at position 465 (Ser-465) is a Phosphoserine. A disordered region spans residues 468–492; the sequence is RQGGASQSDKTPEELFHPLGADSQV. The residue at position 478 (Thr-478) is a Phosphothreonine. The residue at position 490 (Ser-490) is a Phosphoserine.

This sequence belongs to the major facilitator superfamily. Sugar transporter (TC 2.A.1.1) family. Glucose transporter subfamily. Found in a complex with ADD2, DMTN and SLC2A1. Interacts (via C-terminus cytoplasmic region) with DMTN. Interacts with SNX27; the interaction is required when endocytosed to prevent degradation in lysosomes and promote recycling to the plasma membrane. Interacts with GIPC (via PDZ domain). Interacts with STOM. Interacts with SGTA (via Gln-rich region). Interacts with BSG. Interacts with SMIM43; the interaction may promote SLC2A1-mediated glucose transport to meet the energy needs of mesendoderm differentiation. In terms of processing, phosphorylation at Ser-226 by PKC promotes glucose uptake by increasing cell membrane localization.

It is found in the cell membrane. The protein localises to the photoreceptor inner segment. It carries out the reaction D-glucose(out) = D-glucose(in). Its activity is regulated as follows. The uptake of glucose is inhibited by cytochalasin B. Glucose uptake is increased in response to phorbol ester 12-O-tetradecanoylphorbol-13-acetate (TPA) treatment: TPA-induced glucose uptake requires phosphorylation at Ser-226. Functionally, facilitative glucose transporter, which is responsible for constitutive or basal glucose uptake. Has a very broad substrate specificity; can transport a wide range of aldoses including both pentoses and hexoses. Most important energy carrier of the brain: present at the blood-brain barrier and assures the energy-independent, facilitative transport of glucose into the brain. In association with BSG and NXNL1, promotes retinal cone survival by increasing glucose uptake into photoreceptors. Required for mesendoderm differentiation. The protein is Solute carrier family 2, facilitated glucose transporter member 1 of Sus scrofa (Pig).